We begin with the raw amino-acid sequence, 297 residues long: Phosphoribosylaminoimidazole-succinocarboxamide synthase (297 aa).

This sequence belongs to the SAICAR synthetase family.

The enzyme catalyses 5-amino-1-(5-phospho-D-ribosyl)imidazole-4-carboxylate + L-aspartate + ATP = (2S)-2-[5-amino-1-(5-phospho-beta-D-ribosyl)imidazole-4-carboxamido]succinate + ADP + phosphate + 2 H(+). The protein operates within purine metabolism; IMP biosynthesis via de novo pathway; 5-amino-1-(5-phospho-D-ribosyl)imidazole-4-carboxamide from 5-amino-1-(5-phospho-D-ribosyl)imidazole-4-carboxylate: step 1/2. The chain is Phosphoribosylaminoimidazole-succinocarboxamide synthase from Corynebacterium urealyticum (strain ATCC 43042 / DSM 7109).